Consider the following 330-residue polypeptide: Tryptophan--tRNA ligase (330 aa).

Residues 10-12 (QPS) and 18-19 (GN) each bind ATP. Residues 11–19 (PSGTLTLGN) carry the 'HIGH' region motif. Asp-133 is a binding site for L-tryptophan. Residues 145–147 (GED), Ile-184, and 193–197 (KMSKS) each bind ATP. The 'KMSKS' region motif lies at 193–197 (KMSKS).

This sequence belongs to the class-I aminoacyl-tRNA synthetase family. In terms of assembly, homodimer.

Its subcellular location is the cytoplasm. The enzyme catalyses tRNA(Trp) + L-tryptophan + ATP = L-tryptophyl-tRNA(Trp) + AMP + diphosphate + H(+). In terms of biological role, catalyzes the attachment of tryptophan to tRNA(Trp). The protein is Tryptophan--tRNA ligase of Halalkalibacterium halodurans (strain ATCC BAA-125 / DSM 18197 / FERM 7344 / JCM 9153 / C-125) (Bacillus halodurans).